The sequence spans 569 residues: MPATISRAAYADMYGPTTGDKVRLADTDLIIEVERDLTTYGEEVKFGGGKVIRDGMGQSQATRAEGAVDTVITNALIVDHTGIYKADVGLRDGVIAAIGKAGNPDTQTGVDIIIGPGTEAIAGEGRILTAGGFDSHIHFICPQQIEDALHSGITTMIGGGTGPAHGSLATTCTPGAFHIGRMLQSLDAFPMNFGLAGKGNASRPGALVEMIEAGACAMKLHEDWGTTPGAIDCCLSVADDMDVQVMIHTDTLNESGFVENTIAAMKGRTIHAFHTEGAGGGHAPDIMKVVGFEHVLPSSTNPTMPYTVNTLEEHLDMLMVCHHLDKAIPEDVAFAESRIRKETIAAEDILHDMGAFSIIASDSQAMGRVGEVIIRTWQTADKMKKQRGRLAEETGDNDNFRVRRYIAKYTINPAIAHGISAHIGSIEVGKRADLCLWNPAFFGVKPEMILMGGTIVCAQMGDPNASIPTPQPVYTRPMFGAYGRSVENSAVLFVSQAGQAAGIGASLGLAKQTLAVKTCRDIGKSSMVHNSATPEVEVHPETYEVRADGELLTCEPATELPLAQRYFMF.

Positions 136, 138, and 219 each coordinate Ni(2+). At Lys-219 the chain carries N6-carboxylysine. Residue His-221 coordinates substrate. Ni(2+) contacts are provided by His-248 and His-274. His-322 functions as the Proton donor in the catalytic mechanism. Asp-362 is a Ni(2+) binding site.

Belongs to the metallo-dependent hydrolases superfamily. Urease alpha subunit family. As to quaternary structure, heterotrimer of UreA (gamma), UreB (beta) and UreC (alpha) subunits. Three heterotrimers associate to form the active enzyme. Ni cation serves as cofactor. Carboxylation allows a single lysine to coordinate two nickel ions.

It is found in the cytoplasm. It carries out the reaction urea + 2 H2O + H(+) = hydrogencarbonate + 2 NH4(+). The protein operates within nitrogen metabolism; urea degradation; CO(2) and NH(3) from urea (urease route): step 1/1. The protein is Urease subunit alpha of Dinoroseobacter shibae (strain DSM 16493 / NCIMB 14021 / DFL 12).